We begin with the raw amino-acid sequence, 79 residues long: Sulfur carrier protein TusA (79 aa).

C17 functions as the Cysteine persulfide intermediate in the catalytic mechanism.

The protein belongs to the sulfur carrier protein TusA family.

The protein localises to the cytoplasm. Functionally, sulfur carrier protein which probably makes part of a sulfur-relay system. In Haemophilus ducreyi (strain 35000HP / ATCC 700724), this protein is Sulfur carrier protein TusA.